A 309-amino-acid polypeptide reads, in one-letter code: Calcium homeostasis modulator protein 5 (309 aa).

At 1–15 (MDAFQGILKFFLNQK) the chain is on the cytoplasmic side. A 1,2-diacyl-sn-glycero-3-phosphate-binding residues include Lys-15, Arg-32, and Val-37. Residues 16–37 (TVIGYSFMALLTVGSERLFSVV) traverse the membrane as a helical segment. At 38–45 (AFKCPCST) the chain is on the extracellular side. Cystine bridges form between Cys-41–Cys-127, Cys-43–Cys-158, and Cys-142–Cys-149. A helical membrane pass occupies residues 46–70 (ENMTYGLVFLFAPAWVLLILGFFLN). Residues 71–99 (NRSWRLFTGCCVNPRKIFPRGHSCRFFYV) lie on the Cytoplasmic side of the membrane. The chain crosses the membrane as a helical span at residues 100–129 (LGQITLSSLVAPVMWLSVALLNGTFYECAM). The a 1,2-diacyl-sn-glycero-3-phosphate site is built by Gln-102 and Asn-121. Residues 130–174 (SGTRSSGLLELICKGKPKECWEELHKVSCGKTSMLPTVNEELKLS) lie on the Extracellular side of the membrane. The chain crosses the membrane as a helical span at residues 175 to 200 (LQAQSQILGWCLICSASFFSLLTTCY). The Cytoplasmic portion of the chain corresponds to 201–309 (ARCRSKVSYL…MVLVGTAHNM (109 aa)). Residue Arg-202 participates in a 1,2-diacyl-sn-glycero-3-phosphate binding.

The protein belongs to the CALHM family. Oligomerizes to form undecameric cone-shaped channels.

It is found in the membrane. Its function is as follows. May assemble to form large pore channels with gating and ion conductance likely regulated by membrane lipids. The polypeptide is Calcium homeostasis modulator protein 5 (Homo sapiens (Human)).